The chain runs to 1119 residues: Period circadian protein homolog 3 (1119 aa).

The tract at residues 1–48 is disordered; sequence MDPCGNPAVPGGDCPQTRGPGLQGSSGQEGPLQGICVDSSHSEHEDRN. The Nuclear export signal 1 signature appears at 54–63; sequence LIMVVQEMKK. 2 consecutive PAS domains span residues 120-187 and 259-325; these read LASE…PTQL and YEAP…KVLK. A PAC domain is found at 334–377; that stretch reads HSPIRFCTQNGDYVILDSSWSSFVNPWSRKVSFIIGRHKVRTSP. The Nuclear export signal 3 motif lies at 400-409; that stretch reads LQEQIHRLLL. Over residues 419–428 the composition is skewed to low complexity; that stretch reads GYGSLGSSGS. Disordered stretches follow at residues 419–449, 483–530, 718–744, and 878–910; these read GYGSLGSSGSQEQHISVTSSSESSGHCVEEA, VKPV…SSSY, HSRCAGSERRKHKRKKLPTPVDSSSSS, and LEPTPSDHGPRRVEENWETHSEEEHPFISSRSS. Composition is skewed to polar residues over residues 429–442 and 491–515; these read QEQHISVTSSSESS and TEPQGSDEQKDFSSSQTLKNKSTDT. The interval 551–750 is CSNK1E binding domain; it reads LKRKCISCTN…SSSSAHLCPH (200 aa). The Nuclear localization signal signature appears at 720–739; the sequence is RCAGSERRKHKRKKLPTPVD. A compositionally biased stretch (basic and acidic residues) spans 885 to 903; that stretch reads HGPRRVEENWETHSEEEHP. Phosphoserine is present on S907. A Nuclear export signal 2 motif is present at residues 913 to 920; it reads LQLNLLQE. The disordered stretch occupies residues 947 to 1011; sequence GNSGSRSPPC…QDTHRDRAFS (65 aa). Positions 970-988 are enriched in low complexity; it reads SPSAAASGSSASSVHGSGS. The segment covering 989–1001 has biased composition (polar residues); it reads DYTSEVSENGQRS. A CRY binding domain region spans residues 1037–1119; sequence ERGRDTVLRE…VQQKTPVEQL (83 aa).

Homodimer. Component of the circadian core oscillator, which includes the CRY proteins, CLOCK or NPAS2, BMAL1 or BMAL2, CSNK1D and/or CSNK1E, TIMELESS and the PER proteins. Interacts directly with PER1, PER2, CRY1, CRY2, and TIMELESS; interaction with CRY1 and CRY2 is weak and not rhythmic. Interacts with FBXW11 and BTRC. Phosphorylation by CSNK1E is weak and appears to require association with PER1 and translocation to the nucleus. Post-translationally, ubiquitinated.

It is found in the cytoplasm. Its subcellular location is the nucleus. In terms of biological role, originally described as a core component of the circadian clock. The circadian clock, an internal time-keeping system, regulates various physiological processes through the generation of approximately 24 hour circadian rhythms in gene expression, which are translated into rhythms in metabolism and behavior. It is derived from the Latin roots 'circa' (about) and 'diem' (day) and acts as an important regulator of a wide array of physiological functions including metabolism, sleep, body temperature, blood pressure, endocrine, immune, cardiovascular, and renal function. Consists of two major components: the central clock, residing in the suprachiasmatic nucleus (SCN) of the brain, and the peripheral clocks that are present in nearly every tissue and organ system. Both the central and peripheral clocks can be reset by environmental cues, also known as Zeitgebers (German for 'timegivers'). The predominant Zeitgeber for the central clock is light, which is sensed by retina and signals directly to the SCN. The central clock entrains the peripheral clocks through neuronal and hormonal signals, body temperature and feeding-related cues, aligning all clocks with the external light/dark cycle. Circadian rhythms allow an organism to achieve temporal homeostasis with its environment at the molecular level by regulating gene expression to create a peak of protein expression once every 24 hours to control when a particular physiological process is most active with respect to the solar day. Transcription and translation of core clock components (CLOCK, NPAS2, BMAL1, BMAL2, PER1, PER2, PER3, CRY1 and CRY2) plays a critical role in rhythm generation, whereas delays imposed by post-translational modifications (PTMs) are important for determining the period (tau) of the rhythms (tau refers to the period of a rhythm and is the length, in time, of one complete cycle). A diurnal rhythm is synchronized with the day/night cycle, while the ultradian and infradian rhythms have a period shorter and longer than 24 hours, respectively. Disruptions in the circadian rhythms contribute to the pathology of cardiovascular diseases, cancer, metabolic syndromes and aging. A transcription/translation feedback loop (TTFL) forms the core of the molecular circadian clock mechanism. Transcription factors, CLOCK or NPAS2 and BMAL1 or BMAL2, form the positive limb of the feedback loop, act in the form of a heterodimer and activate the transcription of core clock genes and clock-controlled genes (involved in key metabolic processes), harboring E-box elements (5'-CACGTG-3') within their promoters. The core clock genes: PER1/2/3 and CRY1/2 which are transcriptional repressors form the negative limb of the feedback loop and interact with the CLOCK|NPAS2-BMAL1|BMAL2 heterodimer inhibiting its activity and thereby negatively regulating their own expression. This heterodimer also activates nuclear receptors NR1D1, NR1D2, RORA, RORB and RORG, which form a second feedback loop and which activate and repress BMAL1 transcription, respectively. Has a redundant role with the other PER proteins PER1 and PER2 and is not essential for the circadian rhythms maintenance. In contrast, plays an important role in sleep-wake timing and sleep homeostasis probably through the transcriptional regulation of sleep homeostasis-related genes, without influencing circadian parameters. Can bind heme. In Rattus norvegicus (Rat), this protein is Period circadian protein homolog 3 (Per3).